The following is a 412-amino-acid chain: Argininosuccinate synthase (412 aa).

ATP is bound by residues 24–32 (AFSGGLDTS) and Ala-50. Tyr-103 and Ser-108 together coordinate L-citrulline. An ATP-binding site is contributed by Gly-132. L-aspartate contacts are provided by Thr-134, Asn-138, and Asp-139. Asn-138 is an L-citrulline binding site. Arg-142 contacts L-citrulline.

Belongs to the argininosuccinate synthase family. Type 1 subfamily. As to quaternary structure, homotetramer.

It localises to the cytoplasm. It catalyses the reaction L-citrulline + L-aspartate + ATP = 2-(N(omega)-L-arginino)succinate + AMP + diphosphate + H(+). It participates in amino-acid biosynthesis; L-arginine biosynthesis; L-arginine from L-ornithine and carbamoyl phosphate: step 2/3. The sequence is that of Argininosuccinate synthase from Xanthomonas axonopodis pv. citri (strain 306).